The following is a 138-amino-acid chain: Small ribosomal subunit protein uS11c (138 aa).

The segment at 1 to 23 (MAKPILRIGSRKNTRSSSRKNVR) is disordered. Basic residues predominate over residues 9 to 23 (GSRKNTRSSSRKNVR).

This sequence belongs to the universal ribosomal protein uS11 family. In terms of assembly, part of the 30S ribosomal subunit.

It is found in the plastid. The protein resides in the chloroplast. This is Small ribosomal subunit protein uS11c from Nasturtium officinale (Watercress).